The following is a 207-amino-acid chain: uncharacterized protein (207 aa).

It belongs to the flavoredoxin family. FMN serves as cofactor.

This is an uncharacterized protein from Bacillus subtilis (strain 168).